A 183-amino-acid polypeptide reads, in one-letter code: uncharacterized protein (183 aa).

The N-terminal stretch at 1 to 29 (MQCWQQPFLRFLQQPFFLATASLAGSSSS) is a signal peptide. The segment at 149 to 183 (PGSTCDGSLKGRAYPSCVPKRDPEHSREESHPLSG) is disordered. Positions 167–183 (PKRDPEHSREESHPLSG) are enriched in basic and acidic residues.

The protein resides in the secreted. This is an uncharacterized protein from Homo sapiens (Human).